Consider the following 218-residue polypeptide: Small ribosomal subunit protein uS7m (218 aa).

Residues 1-19 (MSLLGRIAEKTSRLSCLRL) constitute a mitochondrion transit peptide.

Belongs to the universal ribosomal protein uS7 family. Component of the mitochondrial ribosome small subunit (28S) which comprises a 12S rRNA and about 30 distinct proteins.

The protein localises to the mitochondrion. This chain is Small ribosomal subunit protein uS7m (mRpS7), found in Drosophila melanogaster (Fruit fly).